Consider the following 269-residue polypeptide: Cytochrome c oxidase subunit 3 (269 aa).

7 helical membrane passes run 13–33 (PFHL…LLVL), 46–66 (NGHY…SFWF), 90–110 (GVIL…WAFF), 138–160 (PLLN…HSII), 167–187 (ALYG…FQGV), 207–227 (FGTG…LVAL), and 245–265 (AGIL…ISIY).

It belongs to the cytochrome c oxidase subunit 3 family. Component of the cytochrome c oxidase (complex IV, CIV), a multisubunit enzyme composed of a catalytic core of 3 subunits and several supernumerary subunits. The complex exists as a monomer or a dimer and forms supercomplexes (SCs) in the inner mitochondrial membrane with ubiquinol-cytochrome c oxidoreductase (cytochrome b-c1 complex, complex III, CIII).

The protein resides in the mitochondrion inner membrane. The enzyme catalyses 4 Fe(II)-[cytochrome c] + O2 + 8 H(+)(in) = 4 Fe(III)-[cytochrome c] + 2 H2O + 4 H(+)(out). Its function is as follows. Component of the cytochrome c oxidase, the last enzyme in the mitochondrial electron transport chain which drives oxidative phosphorylation. The respiratory chain contains 3 multisubunit complexes succinate dehydrogenase (complex II, CII), ubiquinol-cytochrome c oxidoreductase (cytochrome b-c1 complex, complex III, CIII) and cytochrome c oxidase (complex IV, CIV), that cooperate to transfer electrons derived from NADH and succinate to molecular oxygen, creating an electrochemical gradient over the inner membrane that drives transmembrane transport and the ATP synthase. Cytochrome c oxidase is the component of the respiratory chain that catalyzes the reduction of oxygen to water. Electrons originating from reduced cytochrome c in the intermembrane space (IMS) are transferred via the dinuclear copper A center (CU(A)) of subunit 2 and heme A of subunit 1 to the active site in subunit 1, a binuclear center (BNC) formed by heme A3 and copper B (CU(B)). The BNC reduces molecular oxygen to 2 water molecules using 4 electrons from cytochrome c in the IMS and 4 protons from the mitochondrial matrix. In Pyricularia grisea (Crabgrass-specific blast fungus), this protein is Cytochrome c oxidase subunit 3 (COX3).